Reading from the N-terminus, the 296-residue chain is uncharacterized protein (296 aa).

The next 6 helical transmembrane spans lie at 1–21 (MVNL…IFDY), 30–50 (LITA…GFWL), 71–91 (FISF…FVLC), 92–112 (LAQL…STLA), 113–133 (IGLA…LVLF), and 142–162 (IEVA…TTIC).

The protein belongs to the MscS (TC 1.A.23) family.

The protein localises to the cell membrane. This is an uncharacterized protein from Synechocystis sp. (strain ATCC 27184 / PCC 6803 / Kazusa).